A 207-amino-acid chain; its full sequence is Macrophage immunometabolism regulator (207 aa).

M1 is subject to N-acetylmethionine. The interval 1 to 41 is disordered; that stretch reads MEVDVNGESRSALTTLPLPVAEASSPGKAEAEKPRCSSTPC. Residues S25, S140, and S167 each carry the phosphoserine modification.

This sequence belongs to the UNC119-binding protein family. Interacts with UNC119 and UNC119B; interaction preferentially takes place when UNC119 and UNC119B are unliganded with myristoylated proteins.

The protein resides in the cytoplasm. It localises to the cell projection. It is found in the cilium. Regulates the macrophage function, by enhancing the resolution of inflammation and wound repair functions mediated by M2 macrophages. The regulation of macrophage function is, due at least in part, to its ability to inhibit glycolysis. May play also a role in trafficking of proteins via its interaction with UNC119 and UNC119B cargo adapters: may help the release of UNC119 and UNC119B cargo or the recycling of UNC119 and UNC119B. May play a role in ciliary membrane localization via its interaction with UNC119B and protein transport into photoreceptor cells. The sequence is that of Macrophage immunometabolism regulator (MACIR) from Bos taurus (Bovine).